The primary structure comprises 356 residues: Protein RecA (356 aa).

77-84 is an ATP binding site; sequence GPESSGKT.

Belongs to the RecA family.

The protein resides in the cytoplasm. Functionally, can catalyze the hydrolysis of ATP in the presence of single-stranded DNA, the ATP-dependent uptake of single-stranded DNA by duplex DNA, and the ATP-dependent hybridization of homologous single-stranded DNAs. It interacts with LexA causing its activation and leading to its autocatalytic cleavage. The chain is Protein RecA from Caulobacter sp. (strain K31).